We begin with the raw amino-acid sequence, 161 residues long: Nucleotide-binding protein Tbd_1846 (161 aa).

It belongs to the YajQ family.

Its function is as follows. Nucleotide-binding protein. This Thiobacillus denitrificans (strain ATCC 25259 / T1) protein is Nucleotide-binding protein Tbd_1846.